Here is a 473-residue protein sequence, read N- to C-terminus: Aspartyl/glutamyl-tRNA(Asn/Gln) amidotransferase subunit B (473 aa).

It belongs to the GatB/GatE family. GatB subfamily. As to quaternary structure, heterotrimer of A, B and C subunits.

The catalysed reaction is L-glutamyl-tRNA(Gln) + L-glutamine + ATP + H2O = L-glutaminyl-tRNA(Gln) + L-glutamate + ADP + phosphate + H(+). It catalyses the reaction L-aspartyl-tRNA(Asn) + L-glutamine + ATP + H2O = L-asparaginyl-tRNA(Asn) + L-glutamate + ADP + phosphate + 2 H(+). In terms of biological role, allows the formation of correctly charged Asn-tRNA(Asn) or Gln-tRNA(Gln) through the transamidation of misacylated Asp-tRNA(Asn) or Glu-tRNA(Gln) in organisms which lack either or both of asparaginyl-tRNA or glutaminyl-tRNA synthetases. The reaction takes place in the presence of glutamine and ATP through an activated phospho-Asp-tRNA(Asn) or phospho-Glu-tRNA(Gln). This Wolbachia sp. subsp. Drosophila simulans (strain wRi) protein is Aspartyl/glutamyl-tRNA(Asn/Gln) amidotransferase subunit B.